A 61-amino-acid chain; its full sequence is Large ribosomal subunit protein uL30 (61 aa).

The protein belongs to the universal ribosomal protein uL30 family. Part of the 50S ribosomal subunit.

This is Large ribosomal subunit protein uL30 from Thermosipho africanus (strain TCF52B).